A 183-amino-acid polypeptide reads, in one-letter code: Gamma-crystallin N (183 aa).

Beta/gamma crystallin 'Greek key' domains lie at 6–46, 47–89, 95–136, and 138–180; these read GKIT…RVES, GAWV…RPVG, FRID…KVYG, and GAWV…RRVL.

This sequence belongs to the beta/gamma-crystallin family. Monomer. Detected in the auditory hindbrain where it is highly expressed in the medial nucleus of the trapezoid body, but also present in other nuclei of the superior olivary complex.

In terms of biological role, crystallins are the dominant structural components of the vertebrate eye lens. Also plays an important role for integrity and function of auditory nuclei. The protein is Gamma-crystallin N of Rattus norvegicus (Rat).